A 237-amino-acid polypeptide reads, in one-letter code: Demethylmenaquinone methyltransferase (237 aa).

S-adenosyl-L-methionine contacts are provided by residues Thr-58, Asp-79, and Asn-106–Ala-107.

The protein belongs to the class I-like SAM-binding methyltransferase superfamily. MenG/UbiE family.

It catalyses the reaction a 2-demethylmenaquinol + S-adenosyl-L-methionine = a menaquinol + S-adenosyl-L-homocysteine + H(+). It functions in the pathway quinol/quinone metabolism; menaquinone biosynthesis; menaquinol from 1,4-dihydroxy-2-naphthoate: step 2/2. Functionally, methyltransferase required for the conversion of demethylmenaquinol (DMKH2) to menaquinol (MKH2). This Listeria innocua serovar 6a (strain ATCC BAA-680 / CLIP 11262) protein is Demethylmenaquinone methyltransferase.